The chain runs to 25 residues: Cruzioseptin-13 (25 aa).

Asn25 bears the Asparagine amide mark.

As to expression, expressed by the skin glands.

Its subcellular location is the secreted. Functionally, has antimicrobial activity. This is Cruzioseptin-13 from Cruziohyla calcarifer (Splendid leaf frog).